A 613-amino-acid polypeptide reads, in one-letter code: Ribosome-associated molecular chaperone SSB2 (613 aa).

Ala2 carries the N-acetylalanine modification. The segment at 2 to 391 (AEGVFQGAIG…ILTGQSTSDE (390 aa)) is nucleotide binding domain (NBD). 16 to 18 (TTY) contacts ATP. Thr47 is modified (phosphothreonine). ATP-binding positions include Lys73, 205 to 207 (GGT), 271 to 278 (ERAKRTLS), and Gly342. The segment at 392-402 (TKDLLLLDVAP) is inter-domain linker. The tract at residues 403-613 (LSLGVGMQGD…RVVTKAMSSR (211 aa)) is substrate binding domain (SBD). The short motif at 428–430 (KRR) is the Contributes to ribosome binding element. Phosphothreonine is present on Thr431. Positions 516–612 (SEEIEKMVNQ…KRVVTKAMSS (97 aa)) are lid domain (SBDalpha). A Nuclear export signal motif is present at residues 574–582 (IEAALSDAL). The interval 601–613 (GLKRVVTKAMSSR) is required for interaction with ribosomes.

This sequence belongs to the heat shock protein 70 family. Ssb-type Hsp70 subfamily. In terms of assembly, binds to ribosomes. Binds close to the ribosomal tunnel exit via contacts with both ribosomal proteins RPL35, RPL39 and RPL19, and rRNA. Directly interacts with nascent polypeptides. This interaction is dependent on the ribosome-associated complex (RAC). Interacts with SSE1.

The protein localises to the cytoplasm. The enzyme catalyses ATP + H2O = ADP + phosphate + H(+). Ribosome-bound, Hsp70-type chaperone that assists in the cotranslational folding of newly synthesized proteins in the cytosol. Stimulates folding by interacting with nascent chains, binding to short, largely hydrophobic sequences exposed by unfolded proteins, thereby stabilizing longer, more slowly translated, and aggregation-prone nascent polypeptides and domains that cannot fold stably until fully synthesized. The Hsp70-protein substrate interaction depends on ATP-binding and on allosteric regulation between the NBD and the SBD. The ATP-bound state is characterized by a fast exchange rate of substrate (low affinity state), while in the ADP-bound state exchange is much slower (high affinity state). During the Hsp70 cycle, the chaperone switches between the ATP-bound state (open conformation) and the ADP-bound state (closed conformation) by major conformational rearrangements involving mainly the lid domain. Ssb cooperates with a specific Hsp40/Hsp70 co-chaperone termed the ribosome-associated complex (RAC), which stimulates the ATPase activity of the ribosome-associated pool of Ssbs and switches it to the high affinity substrate binding state. Hsp110 chaperone SSE1 and FES1 act as nucleotide exchange factors that cause substrate release. This is Ribosome-associated molecular chaperone SSB2 from Saccharomyces cerevisiae (strain ATCC 204508 / S288c) (Baker's yeast).